The primary structure comprises 65 residues: Putative beta-neurotoxin RjAa4 (65 aa).

The 64-residue stretch at Lys1–Gly64 folds into the LCN-type CS-alpha/beta domain. 4 disulfide bridges follow: Cys11–Cys63, Cys15–Cys37, Cys22–Cys44, and Cys26–Cys46.

Belongs to the long (4 C-C) scorpion toxin superfamily. Sodium channel inhibitor family. Beta subfamily. In terms of tissue distribution, expressed by the venom gland.

It localises to the secreted. In terms of biological role, beta toxins bind voltage-independently at site-4 of sodium channels (Nav) and shift the voltage of activation toward more negative potentials thereby affecting sodium channel activation and promoting spontaneous and repetitive firing. In Rhopalurus junceus (Caribbean blue scorpion), this protein is Putative beta-neurotoxin RjAa4.